The primary structure comprises 59 residues: Conotoxin Bu1.2 (59 aa).

An N-terminal signal peptide occupies residues 1–16; it reads MFTVFLLVVLATTVVS. A propeptide spanning residues 17–42 is cleaved from the precursor; it reads FSTDDESDGSNEEPSADQAARSAMNR. The segment at 18–43 is disordered; sequence STDDESDGSNEEPSADQAARSAMNRP. The span at 19-31 shows a compositional bias: acidic residues; sequence TDDESDGSNEEPS. 2 cysteine pairs are disulfide-bonded: C46/C52 and C47/C57. A Glycine amide modification is found at G58.

This sequence belongs to the conotoxin A superfamily. Expressed by the venom duct.

It is found in the secreted. This is Conotoxin Bu1.2 from Conus bullatus (Bubble cone).